The chain runs to 152 residues: Transcriptional regulator MraZ (152 aa).

2 SpoVT-AbrB domains span residues 5–52 (ASAI…PIHE) and 81–124 (AHEV…DEQS).

This sequence belongs to the MraZ family. In terms of assembly, forms oligomers.

Its subcellular location is the cytoplasm. The protein localises to the nucleoid. In Shewanella baltica (strain OS223), this protein is Transcriptional regulator MraZ.